The primary structure comprises 199 residues: Probable nicotinate-nucleotide adenylyltransferase (199 aa).

This sequence belongs to the NadD family.

The catalysed reaction is nicotinate beta-D-ribonucleotide + ATP + H(+) = deamido-NAD(+) + diphosphate. Its pathway is cofactor biosynthesis; NAD(+) biosynthesis; deamido-NAD(+) from nicotinate D-ribonucleotide: step 1/1. In terms of biological role, catalyzes the reversible adenylation of nicotinate mononucleotide (NaMN) to nicotinic acid adenine dinucleotide (NaAD). This Roseobacter denitrificans (strain ATCC 33942 / OCh 114) (Erythrobacter sp. (strain OCh 114)) protein is Probable nicotinate-nucleotide adenylyltransferase.